We begin with the raw amino-acid sequence, 274 residues long: 3-methyl-2-oxobutanoate hydroxymethyltransferase (274 aa).

Positions 50 and 89 each coordinate Mg(2+). 3-methyl-2-oxobutanoate contacts are provided by residues 50-51 (DS), Asp-89, and Lys-119. Glu-121 lines the Mg(2+) pocket. Glu-188 functions as the Proton acceptor in the catalytic mechanism.

It belongs to the PanB family. Homodecamer; pentamer of dimers. The cofactor is Mg(2+).

The protein resides in the cytoplasm. It catalyses the reaction 3-methyl-2-oxobutanoate + (6R)-5,10-methylene-5,6,7,8-tetrahydrofolate + H2O = 2-dehydropantoate + (6S)-5,6,7,8-tetrahydrofolate. It functions in the pathway cofactor biosynthesis; (R)-pantothenate biosynthesis; (R)-pantoate from 3-methyl-2-oxobutanoate: step 1/2. Functionally, catalyzes the reversible reaction in which hydroxymethyl group from 5,10-methylenetetrahydrofolate is transferred onto alpha-ketoisovalerate to form ketopantoate. This is 3-methyl-2-oxobutanoate hydroxymethyltransferase from Methylorubrum extorquens (strain PA1) (Methylobacterium extorquens).